Consider the following 735-residue polypeptide: Ion-translocating oxidoreductase complex subunit C (735 aa).

4Fe-4S ferredoxin-type domains lie at 368–397 and 407–436; these read MGAP…QQLY and KATA…VQYF. Positions 377, 380, 383, 387, 416, 419, 422, and 426 each coordinate [4Fe-4S] cluster. A disordered region spans residues 562–713; the sequence is AIARAKARKQ…AEPADPRKAA (152 aa).

It belongs to the 4Fe4S bacterial-type ferredoxin family. RnfC subfamily. As to quaternary structure, the complex is composed of six subunits: RsxA, RsxB, RsxC, RsxD, RsxE and RsxG. The cofactor is [4Fe-4S] cluster.

Its subcellular location is the cell inner membrane. Functionally, part of a membrane-bound complex that couples electron transfer with translocation of ions across the membrane. Required to maintain the reduced state of SoxR. This is Ion-translocating oxidoreductase complex subunit C from Salmonella newport (strain SL254).